Here is a 1067-residue protein sequence, read N- to C-terminus: Hemoglobin and hemoglobin-haptoglobin-binding protein B (1067 aa).

The first 24 residues, 1–24 (MTNFKFSLLACSIAFALNASTAYA), serve as a signal peptide directing secretion. Repeat copies occupy residues 26 to 29 (QPTN), 30 to 33 (QPTN), 34 to 37 (QPTN), 38 to 41 (QPTN), 42 to 45 (QPTN), and 46 to 49 (QPTN). The 6 X 4 AA tandem repeats of Q-P-T-N stretch occupies residues 26-49 (QPTNQPTNQPTNQPTNQPTNQPTN). Residues 26-51 (QPTNQPTNQPTNQPTNQPTNQPTNQN) are compositionally biased toward low complexity. The interval 26 to 53 (QPTNQPTNQPTNQPTNQPTNQPTNQNSN) is disordered. A TonB box motif is present at residues 59–66 (EQINVSGS). One can recognise a TBDR plug domain in the interval 71-196 (NIKEKKVGET…LGGSVIFETK (126 aa)). Positions 204–1067 (DKDYYLSYKR…NYRMSVQFEF (864 aa)) constitute a TBDR beta-barrel domain. Residues 1050–1067 (NRFYAPGRNYRMSVQFEF) carry the TonB C-terminal box motif.

The protein belongs to the TonB-dependent receptor family. Hemoglobin/haptoglobin binding protein subfamily.

The protein localises to the cell outer membrane. Functionally, acts as a receptor for hemoglobin or the hemoglobin/haptoglobin complex of the human host and is required for heme uptake. The sequence is that of Hemoglobin and hemoglobin-haptoglobin-binding protein B (hgbB) from Haemophilus influenzae.